The chain runs to 337 residues: Anthranilate phosphoribosyltransferase (337 aa).

5-phospho-alpha-D-ribose 1-diphosphate contacts are provided by residues Gly-81, 84–85 (GD), Thr-89, 91–94 (NIST), 109–117 (KHGNRALSS), and Thr-121. Gly-81 is a binding site for anthranilate. A Mg(2+)-binding site is contributed by Ser-93. An anthranilate-binding site is contributed by Asn-112. Arg-167 lines the anthranilate pocket. The Mg(2+) site is built by Asp-225 and Glu-226.

The protein belongs to the anthranilate phosphoribosyltransferase family. In terms of assembly, homodimer. Mg(2+) is required as a cofactor.

It catalyses the reaction N-(5-phospho-beta-D-ribosyl)anthranilate + diphosphate = 5-phospho-alpha-D-ribose 1-diphosphate + anthranilate. Its pathway is amino-acid biosynthesis; L-tryptophan biosynthesis; L-tryptophan from chorismate: step 2/5. In terms of biological role, catalyzes the transfer of the phosphoribosyl group of 5-phosphorylribose-1-pyrophosphate (PRPP) to anthranilate to yield N-(5'-phosphoribosyl)-anthranilate (PRA). This is Anthranilate phosphoribosyltransferase from Rhizobium meliloti (strain 1021) (Ensifer meliloti).